The sequence spans 450 residues: Flavin-containing monooxygenase FMO GS-OX-like 3 (450 aa).

17-22 (GAGPAG) is an FAD binding site. 215 to 220 (GNSSSA) is a binding site for NADP(+).

This sequence belongs to the FMO family. The cofactor is FAD.

Its function is as follows. Catalyzes the conversion of methylthioalkyl glucosinolates of any chain length into methylsulfinylalkyl glucosinolates. The sequence is that of Flavin-containing monooxygenase FMO GS-OX-like 3 from Arabidopsis thaliana (Mouse-ear cress).